The following is a 445-amino-acid chain: T-box transcription factor TBX19 (445 aa).

The T-box DNA-binding region spans 45–218; the sequence is LEDAPLWQRF…YNPFAKAFLD (174 aa).

It is found in the nucleus. Functionally, transcriptional regulator involved in developmental processes. Can activate POMC gene expression and repress the alpha glycoprotein subunit and thyroid-stimulating hormone beta promoters. The polypeptide is T-box transcription factor TBX19 (Canis lupus familiaris (Dog)).